The following is a 963-amino-acid chain: Importin-13 (963 aa).

20 HEAT repeats span residues 24–54 (ENVEKALHQLYYDPNIENKNLAQKWLMQAQV), 56–88 (PQAWHFSWQLLQPDKVPEIQYFGASALHIKISR), 95–135 (TDQY…LSMM), 142–179 (AVADMVRLFQAEDSPVDSQGRCLALLELLTVLPEEFQT), 194–231 (LAVECGAVFPLLEQLLQQPSSPSCVRQKVLKCFSSWVQ), 236–268 (LQDCEALIQAAFAALQDSELFDSSVEAIVNAIS), 276–325 (VNTL…ALLD), 330–372 (WQSF…DDIL), 375–438 (EAEK…YEML), 440–476 (AELLSNLYDKLGRLLTSSEEPYSWQHTEALLYGFQSI), 487–522 (VVPGLIGLIPRISISNVQLADTVMFTIGALSEWLAD), 524–558 (PVMINSVLPLVLHALGNPELSVSSVSTLKKICREC), 562–600 (LPPYAANIVAVSQDVLMKQIHKTSQCMWLMQALGFLLSA), 603–648 (VEEN…SNLF), 676–716 (PVVV…VKTL), 720–754 (FAPMVPQLCEMLGRMYSTVPQASALDLTRQLVHIF), 761–803 (FPPI…ALKR), 815–845 (VKAVFQCAVLALKFPEAPTVKASCGFFTELL), 860–893 (EDGRMLLIAVLEAIGGQASRSLMDCFADILFALN), and 897–931 (FSLLSMWIKEALQPPGFPSARLSPEQKDTFSQQIL). Residues 45–111 (AQKWLMQAQV…KAHSFTQITR (67 aa)) form the Importin N-terminal domain.

It belongs to the importin beta family. Interacts with UBC9, RAN, RBM8A, eIF-1A and PAX6. Expressed in fetal brain, heart, intestine and kidney.

The protein resides in the cytoplasm. It localises to the nucleus. Its function is as follows. Functions in nuclear protein import as nuclear transport receptor. Serves as receptor for nuclear localization signals (NLS) in cargo substrates. Is thought to mediate docking of the importin/substrate complex to the nuclear pore complex (NPC) through binding to nucleoporin and the complex is subsequently translocated through the pore by an energy requiring, Ran-dependent mechanism. At the nucleoplasmic side of the NPC, Ran binds to the importin, the importin/substrate complex dissociates and importin is re-exported from the nucleus to the cytoplasm where GTP hydrolysis releases Ran. The directionality of nuclear import is thought to be conferred by an asymmetric distribution of the GTP- and GDP-bound forms of Ran between the cytoplasm and nucleus. Mediates the nuclear import of UBC9, the RBM8A/MAGOH complex, PAX6 and probably other members of the paired homeobox family. Also mediates nuclear export of eIF-1A, and the cytoplasmic release of eIF-1A is triggered by the loading of import substrates onto IPO13. The sequence is that of Importin-13 (Ipo13) from Rattus norvegicus (Rat).